Here is a 64-residue protein sequence, read N- to C-terminus: Large ribosomal subunit protein bL32 (64 aa).

A compositionally biased stretch (basic residues) spans M1–S15. The segment at M1–F21 is disordered.

The protein belongs to the bacterial ribosomal protein bL32 family.

This chain is Large ribosomal subunit protein bL32, found in Symbiobacterium thermophilum (strain DSM 24528 / JCM 14929 / IAM 14863 / T).